The chain runs to 418 residues: Ankyrin repeat domain-containing protein 61 (418 aa).

8 ANK repeats span residues 27-57 (ALHS…NQPI), 75-104 (ESII…DPEV), 132-161 (NRTH…QVNT), 167-196 (NKRS…DVNA), 200-229 (ASMT…NVNC), 234-273 (TGNT…KVNA), 277-306 (KGQT…NVNI), and 310-343 (NGES…PLRM).

The polypeptide is Ankyrin repeat domain-containing protein 61 (ANKRD61) (Homo sapiens (Human)).